The sequence spans 415 residues: Gamma-glutamyl phosphate reductase (415 aa).

Belongs to the gamma-glutamyl phosphate reductase family.

The protein localises to the cytoplasm. It catalyses the reaction L-glutamate 5-semialdehyde + phosphate + NADP(+) = L-glutamyl 5-phosphate + NADPH + H(+). Its pathway is amino-acid biosynthesis; L-proline biosynthesis; L-glutamate 5-semialdehyde from L-glutamate: step 2/2. Its function is as follows. Catalyzes the NADPH-dependent reduction of L-glutamate 5-phosphate into L-glutamate 5-semialdehyde and phosphate. The product spontaneously undergoes cyclization to form 1-pyrroline-5-carboxylate. The polypeptide is Gamma-glutamyl phosphate reductase (Thermotoga petrophila (strain ATCC BAA-488 / DSM 13995 / JCM 10881 / RKU-1)).